We begin with the raw amino-acid sequence, 544 residues long: MNQSKRILRTVYLSLFLIGLFMLINDIFSSWMLGSKSSDKELQFDLNKSFDDNKMLLSKSNNFNLIDKAQDIIVETGIYFATFSTFRGNLVSLKLKNHLNLEKDPTDLINVDYKNEPFFDVSFDYLVEDLFLYKKIDDFNHEFKAYFKNNGKTYEYVKKYTFSKKNEYLMRFEVIVNGLEDYNLLDIDSYKITFSSQIERLSDKAKLQYNNYLSQIIYYDNKLKYGKDDLRINNPKWIGSSTKYFEVLVSKENMEVEFKKEKGILKSFIVNNVINKKNISDKFFIYAGPKDNRYLDIFDKNSDNTFGLSDIAFGMSVEKSLWYLIQVPMQMVMQVFYDVIPNWGLSIIFLTIVVRILIFPLTFKGFRATAELSKLQPKMKELQVKFKHDPKKLNEEMGRLYKEEGVNPLGGCFPIILQLPIFFALYSLVNNLFLLRGANFIPGWIDDLSIGDSVYHFGYKLYFVSWTDIRILPFIMMFTQLGSTIVSSNIDLKNLGAQQKFLYFGMPIMFFFILYNMPSGLLIYWITTNIFTILQQYYIKMHLS.

6 consecutive transmembrane segments (helical) span residues L13–L33, L321–P341, W343–F363, L409–V429, L461–L481, and M506–I526.

Belongs to the OXA1/ALB3/YidC family. Type 1 subfamily. As to quaternary structure, interacts with the Sec translocase complex via SecD. Specifically interacts with transmembrane segments of nascent integral membrane proteins during membrane integration.

The protein resides in the cell inner membrane. Its function is as follows. Required for the insertion and/or proper folding and/or complex formation of integral membrane proteins into the membrane. Involved in integration of membrane proteins that insert both dependently and independently of the Sec translocase complex, as well as at least some lipoproteins. Aids folding of multispanning membrane proteins. The polypeptide is Membrane protein insertase YidC (Borreliella afzelii (strain PKo) (Borrelia afzelii)).